The sequence spans 599 residues: ATP-dependent rRNA helicase SPB4 (599 aa).

The Q motif signature appears at 7–35; sequence WDTLDYTLQPWIRTAVDAMGYETMTPVQA. The region spanning 38–224 is the Helicase ATP-binding domain; sequence IPLFARNKDV…KTGMRNPVKV (187 aa). Position 51–58 (51–58) interacts with ATP; sequence SVTGSGKT. The DEAD box motif lies at 172–175; it reads DEAD. The Helicase C-terminal domain maps to 248-415; the sequence is KLQLLLTLLN…GLPEIIRAWI (168 aa). Positions 501–561 form a coiled coil; the sequence is QREKARKLAK…LKRKAIEEKL (61 aa). The tract at residues 559–599 is disordered; sequence EKLIENSDDSDNEVETDWKDIVRQRKKKKTNSGMQGDFGDL. Residues 564 to 573 are compositionally biased toward acidic residues; sequence NSDDSDNEVE.

Belongs to the DEAD box helicase family. DDX55/SPB4 subfamily. Component of pre-60S ribosomal complexes.

It is found in the nucleus. Its subcellular location is the nucleolus. The catalysed reaction is ATP + H2O = ADP + phosphate + H(+). Functionally, ATP-binding RNA helicase involved in the biogenesis of 60S ribosomal subunits. Binds 90S pre-ribosomal particles and dissociates from pre-60S ribosomal particles after processing of 27SB pre-rRNA. Required for the normal formation of 18S rRNA through the processing of pre-rRNAs at sites A0, A1 and A2, and the normal formation of 25S and 5.8S rRNAs through the processing of pre-rRNAs at sites C1 and C2. The protein is ATP-dependent rRNA helicase SPB4 of Eremothecium gossypii (strain ATCC 10895 / CBS 109.51 / FGSC 9923 / NRRL Y-1056) (Yeast).